Reading from the N-terminus, the 213-residue chain is Charged multivesicular body protein 2b (213 aa).

Position 2 is an N-acetylalanine (A2). The stretch at 25–55 (QRAIIRDRAALEKQEKQLELEIKKMAKIGNK) forms a coiled coil. Residues 179–194 (AKAPSAARSLPSASTS) are compositionally biased toward low complexity. The segment at 179 to 199 (AKAPSAARSLPSASTSKATIS) is disordered. A Phosphoserine modification is found at S199. An MIT-interacting motif motif is present at residues 201–211 (EEIERQLKALG).

It belongs to the SNF7 family. In terms of assembly, probable core component of the endosomal sorting required for transport complex III (ESCRT-III). ESCRT-III components are thought to multimerize to form a flat lattice on the perimeter membrane of the endosome. Several assembly forms of ESCRT-III may exist that interact and act sequentially. Interacts with CHMP2A. Interacts with VPS4A. Interacts with VPS4B; the interaction is direct. In terms of tissue distribution, widely expressed. Expressed in brain, heart, skeletal muscle, spleen, kidney, liver, small intestine, pancreas, lung, placenta and leukocytes. In brain, it is expressed in cerebellum, cerebral cortex, medulla, spinal cord, occipital lobe, frontal lobe, temporal lobe and putamen.

The protein resides in the cytoplasm. It localises to the cytosol. It is found in the late endosome membrane. Its function is as follows. Probable core component of the endosomal sorting required for transport complex III (ESCRT-III) which is involved in multivesicular bodies (MVBs) formation and sorting of endosomal cargo proteins into MVBs. MVBs contain intraluminal vesicles (ILVs) that are generated by invagination and scission from the limiting membrane of the endosome and mostly are delivered to lysosomes enabling degradation of membrane proteins, such as stimulated growth factor receptors, lysosomal enzymes and lipids. The MVB pathway appears to require the sequential function of ESCRT-O, -I,-II and -III complexes. ESCRT-III proteins mostly dissociate from the invaginating membrane before the ILV is released. The ESCRT machinery also functions in topologically equivalent membrane fission events, such as the terminal stages of cytokinesis and the budding of enveloped viruses (HIV-1 and other lentiviruses). ESCRT-III proteins are believed to mediate the necessary vesicle extrusion and/or membrane fission activities, possibly in conjunction with the AAA ATPase VPS4. This is Charged multivesicular body protein 2b (CHMP2B) from Homo sapiens (Human).